We begin with the raw amino-acid sequence, 1032 residues long: Leucine-rich repeat and coiled-coil domain-containing protein 1 (1032 aa).

5 LRR repeats span residues 44–65, 66–87, 88–109, 110–131, and 136–157; these read TLHA…DHIW, NLQH…NTLT, KLCT…EELI, NLTR…IPLH, and KLRY…LQCM. Positions 175-218 constitute an LRRCT domain; it reads NPVCRLPGYRAVILQTLPQLRILDCKNIFGEPVNLTEINSSQLQ. The disordered stretch occupies residues 316 to 345; it reads DNVLEKDPRPKRDTDITSESDYGNRKECNR. Positions 318–330 are enriched in basic and acidic residues; the sequence is VLEKDPRPKRDTD. Residues 421 to 647 adopt a coiled-coil conformation; the sequence is NTYQSLVEQL…DLENEFRIAL (227 aa).

This sequence belongs to the LRRCC1 family.

It is found in the cytoplasm. The protein localises to the cytoskeleton. Its subcellular location is the microtubule organizing center. The protein resides in the centrosome. It localises to the centriole. Its function is as follows. Required for the organization of the mitotic spindle. Maintains the structural integrity of centrosomes during mitosis. The sequence is that of Leucine-rich repeat and coiled-coil domain-containing protein 1 (LRRCC1) from Homo sapiens (Human).